The chain runs to 467 residues: Argininosuccinate lyase (467 aa).

It belongs to the lyase 1 family. Argininosuccinate lyase subfamily.

It localises to the cytoplasm. The catalysed reaction is 2-(N(omega)-L-arginino)succinate = fumarate + L-arginine. Its pathway is amino-acid biosynthesis; L-arginine biosynthesis; L-arginine from L-ornithine and carbamoyl phosphate: step 3/3. The polypeptide is Argininosuccinate lyase (Campylobacter curvus (strain 525.92)).